The primary structure comprises 324 residues: Heparan sulfate 2-O-sulfotransferase hst-2 (324 aa).

Over 1–6 (MLWKKR) the chain is Cytoplasmic. The helical; Signal-anchor for type II membrane protein transmembrane segment at 7–24 (KVLYFAGISVFILILLLL) threads the bilayer. At 25 to 324 (KLNSKPKANV…QYHFEKIKPS (300 aa)) the chain is on the lumenal side. Asn75 and Asn94 each carry an N-linked (GlcNAc...) asparagine glycan. Residues His107 and His109 contribute to the active site. Asn161 is a glycosylation site (N-linked (GlcNAc...) asparagine). Cystine bridges form between Cys167–Cys175 and Cys188–Cys194.

This sequence belongs to the sulfotransferase 3 family. As to quaternary structure, homotrimer. In terms of tissue distribution, present in the hypodermis, muscle, distal tip cells (DTCs) and in neurons (at protein level).

The protein localises to the golgi apparatus membrane. In terms of biological role, catalyzes the transfer of sulfate to the C2-position of selected hexuronic acid residues within the maturing heparan sulfate (HS). Involved in cell adhesion and guidance by specifically modifying proteoglycans in the extracellular matrix and on the cell surface that are essential for axon migrations. The sequence is that of Heparan sulfate 2-O-sulfotransferase hst-2 from Caenorhabditis elegans.